A 295-amino-acid polypeptide reads, in one-letter code: Proline iminopeptidase (295 aa).

An AB hydrolase-1 domain is found at 29–279; the sequence is PLLLLHGGPG…GCGHMPFVQE (251 aa). Serine 107 functions as the Nucleophile in the catalytic mechanism. Aspartate 246 is a catalytic residue. The active-site Proton donor is histidine 273.

The protein belongs to the peptidase S33 family.

It localises to the cell envelope. The catalysed reaction is Release of N-terminal proline from a peptide.. In terms of biological role, releases the N-terminal proline from various substrates. The polypeptide is Proline iminopeptidase (Lactobacillus delbrueckii subsp. bulgaricus (strain ATCC 11842 / DSM 20081 / BCRC 10696 / JCM 1002 / NBRC 13953 / NCIMB 11778 / NCTC 12712 / WDCM 00102 / Lb 14)).